Here is a 90-residue protein sequence, read N- to C-terminus: Probable Fe(2+)-trafficking protein (90 aa).

This sequence belongs to the Fe(2+)-trafficking protein family. Monomer.

In terms of biological role, could be a mediator in iron transactions between iron acquisition and iron-requiring processes, such as synthesis and/or repair of Fe-S clusters in biosynthetic enzymes. The sequence is that of Probable Fe(2+)-trafficking protein from Yersinia pseudotuberculosis serotype O:1b (strain IP 31758).